The following is a 354-amino-acid chain: Guanine nucleotide-binding protein G(i) subunit alpha-1 (354 aa).

Gly-2 is lipidated: N-myristoyl glycine. A lipid anchor (S-palmitoyl cysteine) is attached at Cys-3. One can recognise a G-alpha domain in the interval 32 to 354 (REVKLLLLGA…KNNLKDCGLF (323 aa)). A G1 motif region spans residues 35–48 (KLLLLGAGESGKST). GTP-binding positions include 43 to 48 (ESGKST), 150 to 151 (DS), and 175 to 178 (LRTR). Position 47 (Ser-47) interacts with Mg(2+). The tract at residues 173 to 181 (DVLRTRVKT) is G2 motif. Thr-181 is a binding site for Mg(2+). Positions 196-205 (FKMFDVGGQR) are G3 motif. Residues 200–204 (DVGGQ), 269–272 (NKKD), and Ala-326 contribute to the GTP site. The G4 motif stretch occupies residues 265–272 (ILFLNKKD). The segment at 324-329 (TCATDT) is G5 motif.

This sequence belongs to the G-alpha family. G(i/o/t/z) subfamily. As to quaternary structure, heterotrimeric G proteins are composed of 3 units; alpha, beta and gamma. The alpha chain contains the guanine nucleotide binding site. Part of a spindle orientation complex at least composed of GNAI1, GPSM2 and NUMA1. Identified in complex with the beta subunit GNB1 and the gamma subunit GNG1. Identified in complex with the beta subunit GNB1 and the gamma subunit GNG2. Component of the TAS2R14-GNAI1 complex, consisting of TAS2R14, GNAI1, GNB1 and GNG2; within the complex interacts with TAS2R14; this complex plays a role in the perception of bitterness. GTP binding causes dissociation of the heterotrimer, liberating the individual subunits so that they can interact with downstream effector proteins. Interacts (GDP-bound form) with GPSM1; this inhibits guanine nucleotide exchange and GTP binding. Interacts (GDP-bound form) with GPSM2 (via GoLoco domains); this inhibits guanine nucleotide exchange. Interacts with RGS10; this strongly enhances GTP hydrolysis. Interacts with RGS1 and RGS16. Interacts with RGS4. Interacts with RGS12. Interacts (via active GTP- or inactive GDP-bound forms) with RGS14 (via RGS and GoLoco domains). Interacts with RGS3, RGS6, RGS7, RGS8, RGS17, RGS18 and RGS20 (in vitro). Interacts (GDP-bound form) with RIC8A (via C-terminus); promoting GNAI1 folding and association with the plasma membrane. Interacts (inactive GDP-bound form) with NUCB1 (via GBA motif); the interaction leads to activation of GNAI1. Interacts (inactive GDP-bound form) with CCDC88C/DAPLE (via GBA motif); the interaction leads to activation of GNAI1. Interacts (inactive GDP-bound form) with CCDC8A/GIV (via GBA motif). Interacts with GPR15. Myristoylation at Gly-2 is required for membrane anchoring before palmitoylation. In terms of processing, palmitoylation at Cys-3 varies with membrane lipid composition.

It is found in the nucleus. Its subcellular location is the cytoplasm. It localises to the cell membrane. The protein resides in the cytoskeleton. The protein localises to the microtubule organizing center. It is found in the centrosome. Its subcellular location is the cell cortex. It localises to the membrane. The catalysed reaction is GTP + H2O = GDP + phosphate + H(+). Functionally, guanine nucleotide-binding proteins (G proteins) function as transducers downstream of G protein-coupled receptors (GPCRs) in numerous signaling cascades. The alpha chain contains the guanine nucleotide binding site and alternates between an active, GTP-bound state and an inactive, GDP-bound state. Signaling by an activated GPCR promotes GDP release and GTP binding. The alpha subunit has a low GTPase activity that converts bound GTP to GDP, thereby terminating the signal. Both GDP release and GTP hydrolysis are modulated by numerous regulatory proteins. Signaling is mediated via effector proteins, such as adenylate cyclase. Inhibits adenylate cyclase activity of ADCY1, ADCY5 and ADCY6, leading to decreased intracellular cAMP levels. The inactive GDP-bound form prevents the association of RGS14 with centrosomes and is required for the translocation of RGS14 from the cytoplasm to the plasma membrane. Required for normal cytokinesis during mitosis. Required for cortical dynein-dynactin complex recruitment during metaphase. The sequence is that of Guanine nucleotide-binding protein G(i) subunit alpha-1 (Gnai1) from Rattus norvegicus (Rat).